A 147-amino-acid polypeptide reads, in one-letter code: Nucleoside diphosphate kinase (147 aa).

ATP is bound by residues lysine 9, phenylalanine 57, arginine 85, threonine 91, arginine 102, and asparagine 112. Catalysis depends on histidine 115, which acts as the Pros-phosphohistidine intermediate.

The protein belongs to the NDK family. Homotetramer. Mg(2+) serves as cofactor.

The protein localises to the cytoplasm. The enzyme catalyses a 2'-deoxyribonucleoside 5'-diphosphate + ATP = a 2'-deoxyribonucleoside 5'-triphosphate + ADP. The catalysed reaction is a ribonucleoside 5'-diphosphate + ATP = a ribonucleoside 5'-triphosphate + ADP. Its function is as follows. Major role in the synthesis of nucleoside triphosphates other than ATP. The ATP gamma phosphate is transferred to the NDP beta phosphate via a ping-pong mechanism, using a phosphorylated active-site intermediate. The polypeptide is Nucleoside diphosphate kinase (Brevibacillus brevis (strain 47 / JCM 6285 / NBRC 100599)).